Consider the following 490-residue polypeptide: Homoserine O-acetyltransferase (490 aa).

Positions 47–355 (NAILVCHALT…DYGHDAFLLE (309 aa)) constitute an AB hydrolase-1 domain. Catalysis depends on serine 152, which acts as the Nucleophile. Arginine 222 lines the substrate pocket. Residues aspartate 316 and histidine 349 contribute to the active site. Aspartate 350 contributes to the substrate binding site. 2 consecutive CBS domains span residues 376–436 (MKTD…LEDV) and 437–490 (MTKD…ISSY).

Belongs to the AB hydrolase superfamily. MetX family. In terms of assembly, homodimer.

The protein localises to the cytoplasm. It carries out the reaction L-homoserine + acetyl-CoA = O-acetyl-L-homoserine + CoA. The protein operates within amino-acid biosynthesis; L-methionine biosynthesis via de novo pathway; O-acetyl-L-homoserine from L-homoserine: step 1/1. In terms of biological role, transfers an acetyl group from acetyl-CoA to L-homoserine, forming acetyl-L-homoserine. The polypeptide is Homoserine O-acetyltransferase (Methanobrevibacter ruminantium (strain ATCC 35063 / DSM 1093 / JCM 13430 / OCM 146 / M1) (Methanobacterium ruminantium)).